A 129-amino-acid polypeptide reads, in one-letter code: Allergen Bra j 1-E (129 aa).

The segment at 28–47 (KQAMQSGSGPQPQGPQQRPP) is disordered. The span at 32–47 (QSGSGPQPQGPQQRPP) shows a compositional bias: low complexity.

It belongs to the 2S seed storage albumins family. In terms of assembly, the mature protein consists of a small and a large chain linked by two disulfide bonds.

This is a 2S seed storage protein. In Brassica juncea (Indian mustard), this protein is Allergen Bra j 1-E.